Consider the following 122-residue polypeptide: MIQMQSYLDVADNSGAKEVMCIKVLGGSKRRYAHIGDIIKVTVKDAIPRGKVKKGEVYDAVVVRTRKGVRRPDGSLIRFDGNAAVLLNNKQEPIGTRIFGPVTRELRSEKFMKIVSLAPEVL.

Belongs to the universal ribosomal protein uL14 family. As to quaternary structure, part of the 50S ribosomal subunit. Forms a cluster with proteins L3 and L19. In the 70S ribosome, L14 and L19 interact and together make contacts with the 16S rRNA in bridges B5 and B8.

In terms of biological role, binds to 23S rRNA. Forms part of two intersubunit bridges in the 70S ribosome. The sequence is that of Large ribosomal subunit protein uL14 from Xanthomonas axonopodis pv. citri (strain 306).